The primary structure comprises 179 residues: Repressor of phase 1 flagellin gene (179 aa).

Functionally, transcriptional repressor of the FliC phase-1 flagellin. The polypeptide is Repressor of phase 1 flagellin gene (fljA) (Salmonella abortus-equi).